The sequence spans 163 residues: Extracellular giant hemoglobin major globin subunit B2 (163 aa).

An N-terminal signal peptide occupies residues 1-16 (MIALFVLMGLMAAASA). The region spanning 19-163 (CCSSEDRANV…RIANGISAGL (145 aa)) is the Globin domain. An intrachain disulfide couples C20 to C151. C83 contacts hydrogen sulfide. H114 provides a ligand contact to heme b.

Belongs to the globin family. In terms of assembly, the 400 kDa hemoglobin consists of a spherical 24-mer arranged as a double layer of dome-shaped dodecamers. Each dodecamer is composed of the 3-fold trimer of the tetramer A1-A2-B1-B2 having one intra-tetramer (A1-B2) disulfide bond and one inter-tetramer (B1-B2) disulfide bond per tetramer.

The protein resides in the secreted. Functionally, the extracellular giant hemoglobin is able to bind and transport oxygen and hydrosulfide simultaneously and reversibly at two different sites. The polypeptide is Extracellular giant hemoglobin major globin subunit B2 (ghbB2) (Oligobrachia mashikoi (Beard worm)).